Consider the following 461-residue polypeptide: Spermidine coumaroyl-CoA acyltransferase (461 aa).

Residues His-168 and Asp-393 each act as proton acceptor in the active site.

This sequence belongs to the plant acyltransferase family. As to quaternary structure, monomer. As to expression, mainly expressed in roots at low levels, specifically, in the root tip.

It catalyses the reaction 2 (E)-4-coumaroyl-CoA + spermidine = N(1),N(8)-bis(coumaroyl)-spermidine + 2 CoA + 2 H(+). It functions in the pathway amine and polyamine metabolism; spermidine metabolism. Its function is as follows. Spermidine coumaroyl-CoA acyltransferase that mediates the conversion of spermidine into dicoumaroyl-spermidine. This chain is Spermidine coumaroyl-CoA acyltransferase, found in Arabidopsis thaliana (Mouse-ear cress).